The sequence spans 318 residues: Mitochondrial fission regulator 1 (318 aa).

Disordered regions lie at residues 101 to 121 and 154 to 193; these read RPLR…AQQS and QEQS…PSMQ. Residues 124 to 157 adopt a coiled-coil conformation; sequence VINDEAIQKISVLETELAKLRAQIAQIVQAQEQS. The segment covering 154-164 has biased composition (low complexity); sequence QEQSAQSTAPA. Residues 165 to 189 are compositionally biased toward pro residues; sequence PGGPPVPPPMVPVPPPPPPPPPCPT. The segment at 168 to 296 is necessary and sufficient to promote mitochondrial fission; it reads PPVPPPMVPV…TFTFTAFENK (129 aa).

The protein belongs to the MTFR1 family.

It localises to the mitochondrion. May play a role in mitochondrial aerobic respiration. May also regulate mitochondrial organization and fission. The polypeptide is Mitochondrial fission regulator 1 (mtfr1) (Danio rerio (Zebrafish)).